We begin with the raw amino-acid sequence, 185 residues long: RRM domain-containing protein ECU09_1470 (185 aa).

2 consecutive RRM domains span residues 8–87 and 101–170; these read NQLA…YAKR and KKVY…PAYE.

The protein is RRM domain-containing protein ECU09_1470 of Encephalitozoon cuniculi (strain GB-M1) (Microsporidian parasite).